We begin with the raw amino-acid sequence, 152 residues long: MAPSRKNKVVKEEVQVSLGPQVRDGEVVFGVAHIYASFNDTFVHVTDLSGKETISRVTGGMKVKADRDEASPYAAMLAAQDVAEKCKSLGITALHIKLRATGGNRTKTPGPGAQSALRALARSSMKIGRIEDVTPIPSDSTRRKGGRRGRRL.

The disordered stretch occupies residues 131–152 (EDVTPIPSDSTRRKGGRRGRRL). Over residues 143 to 152 (RKGGRRGRRL) the composition is skewed to basic residues.

This sequence belongs to the universal ribosomal protein uS11 family.

This chain is Small ribosomal subunit protein uS11A, found in Anopheles gambiae (African malaria mosquito).